The following is a 396-amino-acid chain: Interleukin enhancer-binding factor 2 homolog (396 aa).

A DZF domain is found at 22–379 (KTFVPRHPFD…KKEGDLEEDI (358 aa)). Residues 367–396 (PTDKKEGDLEEDIDMIENENEEEGSDDGAE) are disordered. Residues 374 to 396 (DLEEDIDMIENENEEEGSDDGAE) show a composition bias toward acidic residues.

Its subcellular location is the nucleus. May regulate transcription of undefined genes. This Drosophila melanogaster (Fruit fly) protein is Interleukin enhancer-binding factor 2 homolog.